We begin with the raw amino-acid sequence, 102 residues long: Vesicle-associated membrane protein 5 (102 aa).

Topologically, residues 1–72 (MAGKELERCQ…RWENIRCRVY (72 aa)) are cytoplasmic. One can recognise a v-SNARE coiled-coil homology domain in the interval 5–65 (ELERCQRQAD…KTLAQQKRWE (61 aa)). A phosphoserine mark is found at S41, S48, and S49. The helical; Anchor for type IV membrane protein transmembrane segment at 73–93 (LGLAVAGGLLLILVVLLVIFL) threads the bilayer. At 94–102 (PSGEDSSKP) the chain is on the vesicular side.

The protein belongs to the synaptobrevin family.

The protein localises to the cell membrane. It is found in the endomembrane system. Its subcellular location is the golgi apparatus. The protein resides in the trans-Golgi network membrane. May participate in trafficking events that are associated with myogenesis, such as myoblast fusion and/or GLUT4 trafficking. The chain is Vesicle-associated membrane protein 5 (Vamp5) from Rattus norvegicus (Rat).